We begin with the raw amino-acid sequence, 502 residues long: NAD(P)H-quinone oxidoreductase chain 4, chloroplastic (502 aa).

13 helical membrane passes run 4–24 (YPWLTIIVLLPIPAGLLIPLL), 39–59 (LGICLLEFLLITHTFCYHFDI), 89–109 (IGLTPLTGFVTTLATLAAWPV), 115–132 (LFHSSMLAMYSGQVGLFT), 136–156 (ILLFFLMWELELIPVYLLLSM), 169–189 (FILYTAGGSIPLLIGALTMGL), 209–229 (IALEIVLYLSFFVAYAVKLPI), 244–264 (HYSTCMLLAGILLKMGGYGLI), 276–296 (SIFAPWLVIVGAFQIVYAASI), 315–335 (MGFVLIGIGSATNIGLNGAIL), 387–407 (SLALPGTSGFAAESMVFPGIV), 418–438 (IIITIVEAIGIILTPIYLLSM), and 466–486 (IFISICLLLPTIGIGLYPNLI).

Belongs to the complex I subunit 4 family.

Its subcellular location is the plastid. The protein resides in the chloroplast thylakoid membrane. It catalyses the reaction a plastoquinone + NADH + (n+1) H(+)(in) = a plastoquinol + NAD(+) + n H(+)(out). The enzyme catalyses a plastoquinone + NADPH + (n+1) H(+)(in) = a plastoquinol + NADP(+) + n H(+)(out). The sequence is that of NAD(P)H-quinone oxidoreductase chain 4, chloroplastic from Huperzia lucidula (Shining clubmoss).